Here is a 356-residue protein sequence, read N- to C-terminus: Vacuolar protein sorting-associated protein 26 (356 aa).

Positions 301–356 (MRRPGTEDDEEEKQTTSIPGTQKFTAPAPVEHPKPESPRSDPKSGSTSPDDNSDSS) are disordered. Positions 315–324 (TTSIPGTQKF) are enriched in polar residues. Residues 331-342 (EHPKPESPRSDP) show a composition bias toward basic and acidic residues.

Belongs to the VPS26 family.

Functionally, may play a role in vesicular protein sorting, similar to the yeast retromer proteins. The sequence is that of Vacuolar protein sorting-associated protein 26 (vps-26) from Caenorhabditis elegans.